Here is a 321-residue protein sequence, read N- to C-terminus: Cytochrome c biogenesis protein CcsA (321 aa).

The next 7 membrane-spanning stretches (helical) occupy residues Ile-17–Leu-37, Lys-43–Ser-63, Leu-71–Ile-91, Met-143–Ile-163, Val-225–Asn-245, Glu-258–His-273, and Ala-286–Leu-306.

This sequence belongs to the CcmF/CycK/Ccl1/NrfE/CcsA family. As to quaternary structure, may interact with Ccs1.

The protein localises to the plastid. It localises to the chloroplast thylakoid membrane. Its function is as follows. Required during biogenesis of c-type cytochromes (cytochrome c6 and cytochrome f) at the step of heme attachment. The chain is Cytochrome c biogenesis protein CcsA from Liriodendron tulipifera (Tuliptree).